Here is a 478-residue protein sequence, read N- to C-terminus: NADH-quinone oxidoreductase subunit N (478 aa).

The next 13 membrane-spanning stretches (helical) occupy residues 8-28, 38-58, 62-82, 106-126, 160-180, 200-220, 234-254, 268-288, 300-320, 322-342, 368-388, 398-418, and 445-465; these read LVLP…FGVW, ILWA…LGTG, AFGG…VILV, PILI…GDLM, FVLG…VYGF, IGLL…VSAV, PTPV…ALIA, WGQI…IAGI, SSIS…AAGV, SMLL…AFIL, AFAL…LGFF, IGAG…IGAF, and FAFL…MAGV.

This sequence belongs to the complex I subunit 2 family. As to quaternary structure, NDH-1 is composed of 14 different subunits. Subunits NuoA, H, J, K, L, M, N constitute the membrane sector of the complex.

The protein resides in the cellular chromatophore membrane. It catalyses the reaction a quinone + NADH + 5 H(+)(in) = a quinol + NAD(+) + 4 H(+)(out). NDH-1 shuttles electrons from NADH, via FMN and iron-sulfur (Fe-S) centers, to quinones in the respiratory chain. The immediate electron acceptor for the enzyme in this species is believed to be ubiquinone. Couples the redox reaction to proton translocation (for every two electrons transferred, four hydrogen ions are translocated across the cytoplasmic membrane), and thus conserves the redox energy in a proton gradient. The chain is NADH-quinone oxidoreductase subunit N from Rhodobacter capsulatus (Rhodopseudomonas capsulata).